Consider the following 677-residue polypeptide: Serine/threonine-protein kinase YPK2/YKR2 (677 aa).

The segment covering 1–12 (MHSWRISKFKLG) has biased composition (basic residues). The segment at 1-115 (MHSWRISKFK…ETQGPSSESG (115 aa)) is disordered. Basic and acidic residues predominate over residues 41–56 (KHHDGSPKNHNHEHEH). 2 stretches are compositionally biased toward polar residues: residues 61 to 93 (INTN…NDNS) and 101 to 115 (SQSS…SESG). 2 positions are modified to phosphothreonine: Thr63 and Thr66. Residue Ser72 is modified to Phosphoserine. The Protein kinase domain maps to 344-599 (FDLLKVIGKG…TDEIRNHPFF (256 aa)). ATP contacts are provided by residues 350–358 (IGKGSFGKV) and Lys373. Asp467 acts as the Proton acceptor in catalysis. Thr499 carries the post-translational modification Phosphothreonine. Residue Thr501 is modified to Phosphothreonine; by PKH2. The region spanning 600–670 (KDISWKKLLL…IGDEQLGDSP (71 aa)) is the AGC-kinase C-terminal domain. Ser641 carries the post-translational modification Phosphoserine; by TOR2. Ser650 carries the phosphoserine modification. At Thr659 the chain carries Phosphothreonine; by TOR2. Position 669 is a phosphoserine (Ser669).

Belongs to the protein kinase superfamily. AGC Ser/Thr protein kinase family. RAC subfamily. Post-translationally, autophosphorylated. Phosphorylated by PKH2 and TOR2.

The protein localises to the cytoplasm. The enzyme catalyses L-seryl-[protein] + ATP = O-phospho-L-seryl-[protein] + ADP + H(+). The catalysed reaction is L-threonyl-[protein] + ATP = O-phospho-L-threonyl-[protein] + ADP + H(+). Its activity is regulated as follows. Activated by phytosphingosine (PHS), a sphingoid long chain base. Activated by PKH2 phosphorylation. Kinase activity is regulated by TOR2 via direct phosphorylation of Ser-641 and Thr-659. Plays an essential role in the proliferation of yeast cells. Involved in a signaling pathway, required for optimal cell wall integrity, that acts in parallel with the PKC1-SLT2-dependent pathway. A substrate of TOR complex 2 (TORC2) and required for TORC2 to regulate spatial aspects of cell growth. Phosphorylation of residue Thr-501 is indispensable for function. May act as a downstream kinase in the sphingolipid-mediated signaling pathway. The chain is Serine/threonine-protein kinase YPK2/YKR2 (YPK2) from Saccharomyces cerevisiae (strain ATCC 204508 / S288c) (Baker's yeast).